The following is a 981-amino-acid chain: uncharacterized protein (981 aa).

Residues 535 to 612 form the Carrier domain; that stretch reads VLLNPVAIEI…SIASIIQKKS (78 aa). Position 571 is an O-(pantetheine 4'-phosphoryl)serine (Ser571).

The protein belongs to the ATP-dependent AMP-binding enzyme family.

This is an uncharacterized protein from Schizosaccharomyces pombe (strain 972 / ATCC 24843) (Fission yeast).